The sequence spans 223 residues: MRVLVVEDNALLRHHLKVQIQDAGHQVDDAEDAKEADYYLNEHIPDIAIVDLGLPDEDGLSLIRRWRSNDVSLPILVLTARESWQDKVEVLSAGADDYVTKPFHIEEVMARMQALMRRNSGLASQVISLPPFQVDLSRRELSINDEVIKLTAFEYTIMETLIRNNGKVVSKDSLMLQLYPDAELRESHTIDVLMGRLRKKIQAQYPQEVITTVRGQGYLFELR.

One can recognise a Response regulatory domain in the interval 2-116; the sequence is RVLVVEDNAL…EVMARMQALM (115 aa). D51 is modified (4-aspartylphosphate). A DNA-binding region (ompR/PhoB-type) is located at residues 124–222; the sequence is SQVISLPPFQ…VRGQGYLFEL (99 aa).

In terms of assembly, monomer in the inactive, unphosphorylated state and dimer in the active, phosphorylated state. In terms of processing, phosphorylated by PhoQ.

Its subcellular location is the cytoplasm. Its activity is regulated as follows. Feedback inhibited by MgrB, which seems to bind PhoQ, altering its activity and that of downstream effector PhoP. PhoP-regulated transcription is redox-sensitive, being activated when the periplasm becomes more reducing (deletion of dsbA/dsbB, or treatment with dithiothreitol). MgrB acts between DsbA/DsbB and PhoP/PhoQ in this pathway. Functionally, member of the two-component regulatory system PhoP/PhoQ involved in adaptation to low Mg(2+) environments and the control of acid resistance genes. In low periplasmic Mg(2+), PhoQ phosphorylates PhoP, resulting in the expression of PhoP-activated genes (PAG) and repression of PhoP-repressed genes (PRG). In high periplasmic Mg(2+), PhoQ dephosphorylates phospho-PhoP, resulting in the repression of PAG and may lead to expression of some PRG. Mediates magnesium influx to the cytosol by activation of MgtA. Promotes expression of the two-component regulatory system rstA/rstB and transcription of the hemL, mgrB, nagA, slyB, vboR and yrbL genes. The sequence is that of Transcriptional regulatory protein PhoP (phoP) from Escherichia coli (strain K12).